We begin with the raw amino-acid sequence, 197 residues long: Elongation factor Ts (197 aa).

An involved in Mg(2+) ion dislocation from EF-Tu region spans residues 81–84 (TDFV).

This sequence belongs to the EF-Ts family.

It localises to the cytoplasm. In terms of biological role, associates with the EF-Tu.GDP complex and induces the exchange of GDP to GTP. It remains bound to the aminoacyl-tRNA.EF-Tu.GTP complex up to the GTP hydrolysis stage on the ribosome. The sequence is that of Elongation factor Ts from Sulfurihydrogenibium sp. (strain YO3AOP1).